We begin with the raw amino-acid sequence, 274 residues long: 3',5'-cyclic adenosine monophosphate phosphodiesterase CpdA (274 aa).

Residues aspartate 21, histidine 23, aspartate 63, asparagine 93, histidine 163, histidine 202, and histidine 204 each coordinate Fe cation. Residues histidine 23, aspartate 63, and 93–94 (NH) each bind AMP. Histidine 204 lines the AMP pocket.

Belongs to the cyclic nucleotide phosphodiesterase class-III family. Fe(2+) is required as a cofactor.

The catalysed reaction is 3',5'-cyclic AMP + H2O = AMP + H(+). Functionally, hydrolyzes cAMP to 5'-AMP. Plays an important regulatory role in modulating the intracellular concentration of cAMP, thereby influencing cAMP-dependent processes. May coordinate responses to nutritional stress, ensuring optimal competence development. This Haemophilus influenzae (strain ATCC 51907 / DSM 11121 / KW20 / Rd) protein is 3',5'-cyclic adenosine monophosphate phosphodiesterase CpdA.